The primary structure comprises 158 residues: Small ribosomal subunit protein uS7 (158 aa).

The protein belongs to the universal ribosomal protein uS7 family. As to quaternary structure, part of the 30S ribosomal subunit. Contacts proteins S9 and S11.

In terms of biological role, one of the primary rRNA binding proteins, it binds directly to 16S rRNA where it nucleates assembly of the head domain of the 30S subunit. Is located at the subunit interface close to the decoding center, probably blocks exit of the E-site tRNA. This Leptospira biflexa protein is Small ribosomal subunit protein uS7.